The following is a 255-amino-acid chain: Homeobox protein DLX-1 (255 aa).

Residues 1 to 14 (MTMTTMPESLNSPV) show a composition bias toward polar residues. Disordered regions lie at residues 1-38 (MTMT…MSHG) and 95-118 (SLAQ…EGGE). The segment covering 25-36 (PPNQQMSPSPMS) has biased composition (low complexity). Residues 100–112 (RLEDPGADSEKST) show a composition bias toward basic and acidic residues. A DNA-binding region (homeobox) is located at residues 128-187 (IRKPRTIYSSLQLQALNRRFQQTQYLALPERAELAASLGLTQTQVKIWFQNKRSKFKKLM). The segment at 204–233 (ALSAGSPPVPPGWNPNSSSGKGSGSSAGSY) is disordered. Residues 217–232 (NPNSSSGKGSGSSAGS) show a composition bias toward low complexity.

The protein belongs to the distal-less homeobox family. As to quaternary structure, interacts with SMAD4 (via homeobox DNA-binding domain). Interacts (via homeobox DNA-binding domain) with POU4F2; this interaction suppresses DLX1-mediated transcriptional activity in postnatal retina and enhances retinal ganglion cell (RGC) differentiation. Expressed in a restricted region of the developing brain, within the diencephalon and the adjacent telencephalic regions.

The protein localises to the nucleus. Functionally, plays a role as a transcriptional activator or repressor. Inhibits several cytokine signaling pathways, such as TGFB1, activin-A/INHBA and BMP4 by interfering with the transcriptional stimulatory activity of transcription factors, such as MSX2, FAST2, SMAD2 and SMAD3 during hematopoietic cell differentiation. Plays a role in terminal differentiation of interneurons, such as amacrine and bipolar cells in the developing retina. Likely to play a regulatory role in the development of the ventral forebrain. May play a role in craniofacial patterning and morphogenesis and may be involved in the early development of diencephalic subdivisions. In Mus musculus (Mouse), this protein is Homeobox protein DLX-1 (Dlx1).